Reading from the N-terminus, the 348-residue chain is Alanine racemase (348 aa).

The active-site Proton acceptor; specific for D-alanine is the K34. K34 carries the post-translational modification N6-(pyridoxal phosphate)lysine. R127 lines the substrate pocket. The Proton acceptor; specific for L-alanine role is filled by Y243. Position 291 (M291) interacts with substrate.

It belongs to the alanine racemase family. Pyridoxal 5'-phosphate is required as a cofactor.

It carries out the reaction L-alanine = D-alanine. It functions in the pathway amino-acid biosynthesis; D-alanine biosynthesis; D-alanine from L-alanine: step 1/1. Its function is as follows. Catalyzes the interconversion of L-alanine and D-alanine. May also act on other amino acids. The sequence is that of Alanine racemase (alr) from Coprothermobacter proteolyticus (strain ATCC 35245 / DSM 5265 / OCM 4 / BT).